A 351-amino-acid chain; its full sequence is Flap endonuclease 1 (351 aa).

Residues 1–98 are N-domain; that stretch reads MDLAELVEEI…QELERRKKVK (98 aa). Residues Asp27, Asp80, Glu154, Glu156, Asp175, Asp177, and Asp238 each contribute to the Mg(2+) site. The interval 118–260 is I-domain; the sequence is ELKKYAQMSI…TAYRIIKKYG (143 aa). The segment at 343–351 is interaction with PCNA; it reads RQTGLDQWF.

Belongs to the XPG/RAD2 endonuclease family. FEN1 subfamily. As to quaternary structure, interacts with PCNA. PCNA stimulates the nuclease activity without altering cleavage specificity. The cofactor is Mg(2+).

In terms of biological role, structure-specific nuclease with 5'-flap endonuclease and 5'-3' exonuclease activities involved in DNA replication and repair. During DNA replication, cleaves the 5'-overhanging flap structure that is generated by displacement synthesis when DNA polymerase encounters the 5'-end of a downstream Okazaki fragment. Binds the unpaired 3'-DNA end and kinks the DNA to facilitate 5' cleavage specificity. Cleaves one nucleotide into the double-stranded DNA from the junction in flap DNA, leaving a nick for ligation. Also involved in the base excision repair (BER) pathway. Acts as a genome stabilization factor that prevents flaps from equilibrating into structures that lead to duplications and deletions. Also possesses 5'-3' exonuclease activity on nicked or gapped double-stranded DNA. This chain is Flap endonuclease 1, found in Sulfurisphaera tokodaii (strain DSM 16993 / JCM 10545 / NBRC 100140 / 7) (Sulfolobus tokodaii).